A 154-amino-acid chain; its full sequence is Aspartate carbamoyltransferase regulatory chain (154 aa).

Positions 111, 116, 139, and 142 each coordinate Zn(2+).

This sequence belongs to the PyrI family. Contains catalytic and regulatory chains. Zn(2+) serves as cofactor.

Involved in allosteric regulation of aspartate carbamoyltransferase. The protein is Aspartate carbamoyltransferase regulatory chain of Parabacteroides distasonis (strain ATCC 8503 / DSM 20701 / CIP 104284 / JCM 5825 / NCTC 11152).